Here is a 977-residue protein sequence, read N- to C-terminus: uncharacterized protein (977 aa).

Positions 1-24 (MQSNLLKVLGVLAIVATLVCFIFA) are cleaved as a signal peptide. The interval 125–146 (TESTRPGKSNLDDKGNMIPIPR) is disordered. The next 6 helical transmembrane spans lie at 612–632 (IKAI…LGFA), 722–742 (LGLS…IVII), 754–774 (AFMA…FLLF), 796–816 (VVMM…LDFV), 833–853 (FIGT…INWF), and 866–886 (GVNM…YGYV). The interval 918 to 977 (KALSPIGMDDKTRQGITGRAEARLKQRNKTLDQAEKNRKNTPKEGGEKTNAEPPQPEARG) is disordered. Over residues 937-967 (AEARLKQRNKTLDQAEKNRKNTPKEGGEKTN) the composition is skewed to basic and acidic residues.

The protein belongs to the TrbL/VirB6 family.

The protein resides in the cell membrane. This is an uncharacterized protein from Rickettsia felis (strain ATCC VR-1525 / URRWXCal2) (Rickettsia azadi).